We begin with the raw amino-acid sequence, 397 residues long: Decapping and exoribonuclease protein (397 aa).

The span at 1–20 (MESRGTKREAGKIEVAEPRN) shows a compositional bias: basic and acidic residues. A disordered region spans residues 1–37 (MESRGTKREAGKIEVAEPRNKLPRPAPSLPTDPALYS). Arginine 58 provides a ligand contact to substrate. Residues 67 to 88 (LRYYSPPPTNGQSPNFDLRDGY) form a disordered region. Residues glutamate 101 and 131-133 (WRG) each bind substrate. Residue glutamate 192 coordinates Mg(2+). Residues cysteine 217 and glutamate 234 each coordinate substrate. Residues glutamate 234, aspartate 236, glutamate 253, and leucine 254 each coordinate Mg(2+). Residues lysine 255 and glutamine 280 each coordinate substrate. Phosphothreonine is present on threonine 392. Serine 394 is subject to Phosphoserine.

This sequence belongs to the DXO/Dom3Z family. Mg(2+) is required as a cofactor.

The protein resides in the nucleus. It carries out the reaction a 5'-end triphospho-ribonucleoside in mRNA + H2O = a 5'-end phospho-ribonucleoside in mRNA + diphosphate + H(+). It catalyses the reaction a 5'-end NAD(+)-phospho-ribonucleoside in mRNA + H2O = a 5'-end phospho-ribonucleoside in mRNA + NAD(+) + H(+). The catalysed reaction is a 5'-end NAD(+)-phospho-ribonucleoside in snoRNA + H2O = a 5'-end phospho-ribonucleoside in snoRNA + NAD(+) + H(+). The enzyme catalyses a 5'-end (N(7)-methyl 5'-triphosphoguanosine)-ribonucleoside-ribonucleotide in mRNA + H2O = a (N(7)-methyl 5'-triphosphoguanosine)-nucleoside + a 5'-end phospho-ribonucleoside in mRNA + H(+). It carries out the reaction a 5'-end FAD-phospho-ribonucleoside in mRNA + H2O = a 5'-end phospho-ribonucleoside in mRNA + FAD + H(+). It catalyses the reaction a 5'-end CoA-ribonucleoside in mRNA + H2O = 3'-dephospho-CoA + a 5'-end phospho-ribonucleoside in mRNA + H(+). Decapping enzyme for NAD-capped RNAs: specifically hydrolyzes the nicotinamide adenine dinucleotide (NAD) cap from a subset of RNAs by removing the entire NAD moiety from the 5'-end of an NAD-capped RNA. The NAD-cap is present at the 5'-end of some RNAs and snoRNAs. In contrast to the canonical 5'-end N7 methylguanosine (m7G) cap, the NAD cap promotes mRNA decay. Preferentially acts on NAD-capped transcripts in response to environmental stress. Also acts as a non-canonical decapping enzyme that removes the entire cap structure of m7G capped or incompletely capped RNAs and mediates their subsequent degradation. Specifically degrades pre-mRNAs with a defective 5'-end m7G cap and is part of a pre-mRNA capping quality control. Has decapping activity toward incomplete 5'-end m7G cap mRNAs such as unmethylated 5'-end-capped RNA (cap0), while it has no activity toward 2'-O-ribose methylated m7G cap (cap1). In contrast to canonical decapping enzymes DCP2 and NUDT16, which cleave the cap within the triphosphate linkage, the decapping activity releases the entire cap structure GpppN and a 5'-end monophosphate RNA. Also has 5'-3' exoribonuclease activities: The 5'-end monophosphate RNA is then degraded by the 5'-3' exoribonuclease activity, enabling this enzyme to decap and degrade incompletely capped mRNAs. Also possesses RNA 5'-pyrophosphohydrolase activity by hydrolyzing the 5'-end triphosphate to release pyrophosphates. Exhibits decapping activity towards FAD-capped RNAs. Exhibits decapping activity towards dpCoA-capped RNAs in vitro. This chain is Decapping and exoribonuclease protein, found in Bos taurus (Bovine).